We begin with the raw amino-acid sequence, 242 residues long: N-alpha-acetyltransferase 60 (242 aa).

The Cytoplasmic portion of the chain corresponds to 1–192 (MSEEERPAAL…GGHPPWTVMD (192 aa)). The N-acetyltransferase domain occupies 13–182 (TILRFLCHDD…DAYTYVLYLN (170 aa)). Position 38 (Y38) interacts with substrate. The active site involves Y97. L99 is a binding site for substrate. Residues 101–103 (LGV) and 109–114 (KQGIGS) contribute to the acetyl-CoA site. H138 is a catalytic residue. Residues N143 and 150–153 (YENR) contribute to the acetyl-CoA site. Residues 162 to 173 (PYYYSIRGVLQD) form a required for homodimerization region. A substrate-binding site is contributed by Y165. The segment at residues 193–236 (YLQHLGSALAGFSPCTLPQRIYRQAHTLLRSLLPWSSISAKSGI) is an intramembrane region (helical). Residues 237–242 (EYSRTM) lie on the Cytoplasmic side of the membrane.

It belongs to the acetyltransferase family. NAA60 subfamily. As to quaternary structure, monomer and homodimer; monomer in presence of substrate and homodimer in its absence.

It is found in the golgi apparatus membrane. It carries out the reaction N-terminal L-methionyl-[transmembrane protein] + acetyl-CoA = N-terminal N(alpha)-acetyl-L-methionyl-[transmembrane protein] + CoA + H(+). The catalysed reaction is L-lysyl-[protein] + acetyl-CoA = N(6)-acetyl-L-lysyl-[protein] + CoA + H(+). N-alpha-acetyltransferase that specifically mediates the acetylation of N-terminal residues of the transmembrane proteins, with a strong preference for N-termini facing the cytosol. Displays N-terminal acetyltransferase activity towards a range of N-terminal sequences including those starting with Met-Lys, Met-Val, Met-Ala and Met-Met. Required for normal chromosomal segregation during anaphase. May also show histone acetyltransferase activity; such results are however unclear in vivo and would require additional experimental evidences. The protein is N-alpha-acetyltransferase 60 (naa60) of Xenopus tropicalis (Western clawed frog).